A 471-amino-acid chain; its full sequence is Trigger factor (471 aa).

The region spanning Asp166–Pro245 is the PPIase FKBP-type domain. The segment at Ala442–Phe471 is disordered. Residues Gly447–Glu456 show a composition bias toward acidic residues.

It belongs to the FKBP-type PPIase family. Tig subfamily.

Its subcellular location is the cytoplasm. It catalyses the reaction [protein]-peptidylproline (omega=180) = [protein]-peptidylproline (omega=0). Its function is as follows. Involved in protein export. Acts as a chaperone by maintaining the newly synthesized protein in an open conformation. Functions as a peptidyl-prolyl cis-trans isomerase. This chain is Trigger factor, found in Renibacterium salmoninarum (strain ATCC 33209 / DSM 20767 / JCM 11484 / NBRC 15589 / NCIMB 2235).